A 328-amino-acid chain; its full sequence is NADH-quinone oxidoreductase subunit H 2 (328 aa).

A run of 8 helical transmembrane segments spans residues 3-23, 77-97, 119-139, 165-185, 191-211, 250-270, 272-292, and 307-327; these read LIVA…ILLL, FLFK…FAAI, VALL…IFGG, MGFA…LDIV, VWNV…GLAE, MVLV…GVLI, LPPL…FMWF, and IGWK…GVVF.

It belongs to the complex I subunit 1 family. As to quaternary structure, NDH-1 is composed of 14 different subunits. Subunits NuoA, H, J, K, L, M, N constitute the membrane sector of the complex.

The protein resides in the cell inner membrane. The catalysed reaction is a quinone + NADH + 5 H(+)(in) = a quinol + NAD(+) + 4 H(+)(out). In terms of biological role, NDH-1 shuttles electrons from NADH, via FMN and iron-sulfur (Fe-S) centers, to quinones in the respiratory chain. The immediate electron acceptor for the enzyme in this species is believed to be ubiquinone. Couples the redox reaction to proton translocation (for every two electrons transferred, four hydrogen ions are translocated across the cytoplasmic membrane), and thus conserves the redox energy in a proton gradient. This subunit may bind ubiquinone. In Rhizobium meliloti (strain 1021) (Ensifer meliloti), this protein is NADH-quinone oxidoreductase subunit H 2.